We begin with the raw amino-acid sequence, 131 residues long: Auxin-responsive protein SAUR77 (131 aa).

It belongs to the ARG7 family.

May be involved in the regulation of ethylene receptor signaling. Promotes cell expansion and plant growth. The chain is Auxin-responsive protein SAUR77 from Arabidopsis thaliana (Mouse-ear cress).